An 861-amino-acid polypeptide reads, in one-letter code: E3 ubiquitin-protein ligase SH3RF1 (861 aa).

The segment at cysteine 12 to arginine 53 adopts an RING-type zinc-finger fold. 2 SH3 domains span residues proline 132–proline 191 and glutamine 194–alanine 257. Residues serine 268 to serine 319 are disordered. A compositionally biased stretch (low complexity) spans glycine 273–serine 285. A compositionally biased stretch (polar residues) spans phenylalanine 301 to arginine 317. Residues threonine 435–arginine 496 form the SH3 3 domain. The interval asparagine 684–serine 731 is disordered. A compositionally biased stretch (basic and acidic residues) spans lysine 689–glycine 700. Positions arginine 802 to isoleucine 861 constitute an SH3 4 domain.

The protein belongs to the SH3RF family. Autoubiquitinated. Ubiquitinated by SH3RF2, leading to proteasome-mediated degradation.

Its subcellular location is the cytoplasm. It localises to the perinuclear region. The protein localises to the cell projection. It is found in the lamellipodium. The protein resides in the golgi apparatus. Its subcellular location is the trans-Golgi network. The catalysed reaction is S-ubiquitinyl-[E2 ubiquitin-conjugating enzyme]-L-cysteine + [acceptor protein]-L-lysine = [E2 ubiquitin-conjugating enzyme]-L-cysteine + N(6)-ubiquitinyl-[acceptor protein]-L-lysine.. Its pathway is protein modification; protein ubiquitination. Functionally, has E3 ubiquitin-protein ligase activity. In the absence of an external substrate, it can catalyze self-ubiquitination. Acts as a scaffold protein that contributes to the effective activation of the JNK signaling pathway. The sequence is that of E3 ubiquitin-protein ligase SH3RF1 (sh3rf1) from Xenopus tropicalis (Western clawed frog).